We begin with the raw amino-acid sequence, 172 residues long: ATP synthase subunit b (172 aa).

The helical transmembrane segment at S12 to V32 threads the bilayer. Composition is skewed to basic and acidic residues over residues E63–A74 and A116–A131. The interval E63–A131 is disordered.

Belongs to the ATPase B chain family. In terms of assembly, F-type ATPases have 2 components, F(1) - the catalytic core - and F(0) - the membrane proton channel. F(1) has five subunits: alpha(3), beta(3), gamma(1), delta(1), epsilon(1). F(0) has three main subunits: a(1), b(2) and c(10-14). The alpha and beta chains form an alternating ring which encloses part of the gamma chain. F(1) is attached to F(0) by a central stalk formed by the gamma and epsilon chains, while a peripheral stalk is formed by the delta and b chains.

Its subcellular location is the cell membrane. Its function is as follows. F(1)F(0) ATP synthase produces ATP from ADP in the presence of a proton or sodium gradient. F-type ATPases consist of two structural domains, F(1) containing the extramembraneous catalytic core and F(0) containing the membrane proton channel, linked together by a central stalk and a peripheral stalk. During catalysis, ATP synthesis in the catalytic domain of F(1) is coupled via a rotary mechanism of the central stalk subunits to proton translocation. Functionally, component of the F(0) channel, it forms part of the peripheral stalk, linking F(1) to F(0). The sequence is that of ATP synthase subunit b from Limosilactobacillus reuteri (strain DSM 20016) (Lactobacillus reuteri).